A 102-amino-acid chain; its full sequence is Small ribosomal subunit protein uS10 (102 aa).

The protein belongs to the universal ribosomal protein uS10 family. In terms of assembly, part of the 30S ribosomal subunit.

In terms of biological role, involved in the binding of tRNA to the ribosomes. In Streptococcus thermophilus (strain CNRZ 1066), this protein is Small ribosomal subunit protein uS10.